We begin with the raw amino-acid sequence, 442 residues long: D(2) dopamine receptor A (442 aa).

The Extracellular segment spans residues Met-1–Tyr-31. Residues Asn-5, Asn-15, and Asn-18 are each glycosylated (N-linked (GlcNAc...) asparagine). A helical transmembrane segment spans residues Ala-32–Ser-54. Residues Arg-55–Asn-64 are Cytoplasmic-facing. Residues Tyr-65–Tyr-87 traverse the membrane as a helical segment. The Extracellular segment spans residues Met-88–Asp-102. A disulfide bond links Cys-101 and Cys-176. The helical transmembrane segment at Ile-103–Ile-124 threads the bilayer. Residues Asp-125–Arg-145 lie on the Cytoplasmic side of the membrane. Residues Val-146–Phe-166 form a helical membrane-spanning segment. The Extracellular segment spans residues Gly-167–Ala-182. Residues Phe-183 to Tyr-207 form a helical membrane-spanning segment. Residues Ile-208–Gln-372 are Cytoplasmic-facing. The tract at residues Asp-273–Lys-335 is disordered. Residues Ala-304–Val-318 are compositionally biased toward polar residues. Basic and acidic residues predominate over residues Tyr-322–Lys-335. A helical transmembrane segment spans residues Met-373–Leu-394. Residues Asn-395–Ser-408 lie on the Extracellular side of the membrane. A disulfide bond links Cys-398 and Cys-400. A helical membrane pass occupies residues Ala-409–Val-430. Over Glu-431–Cys-442 the chain is Cytoplasmic. A lipid anchor (S-palmitoyl cysteine) is attached at Cys-442.

It belongs to the G-protein coupled receptor 1 family. Palmitoylated. Palmitoylation is probably required for proper localization to the plasma membrane and stability of the receptor. As to expression, brain; pituitary.

Its subcellular location is the cell membrane. The protein resides in the golgi apparatus membrane. In terms of biological role, this is one of the five types (D1 to D5) of receptors for dopamine. The activity of this receptor is mediated by G proteins which inhibits adenylyl cyclase. In Xenopus D2R is involved in the regulation of the melanotrope cells of the intermediate pituitary during background adaptation of the animal. In Xenopus laevis (African clawed frog), this protein is D(2) dopamine receptor A (drd2-a).